The primary structure comprises 421 residues: MMIKVKKETMRACLSCSICDNILRDATTISECLHTFCRKCIYEKITEDEIETCPVCNIDLGSTPLEKLRPDHNLQDLRAKIFALKRRKVKAPGIVSLPGKRKERSISSLVVSTPMVSAQAGTTRRRTKAPTRKELRNGSLAERTVKKEESSGDELLESTSSPDTLNKFTQNKRQSKKSCKESISNKENKDGDEPWDSKMDWKPLNFLVEVANGTKPLKSSASQGSGSKSEHANVSRNQFQGSKTKTKNKKRKCKREDDKSNNGDPTTSETVTPKRMRTTQRKRSATTLGDSRNLPQPDESSAKQERRNGPVWFSLVASNDQEGGTSLPQIPANFLRIRDGNTTVSFIQKYLMRKLDLESENEIEIKCMGEAVIPTLTLYNLVDLWLQKSSNHQRFAALVGSSAKDFTMVLVYARKLPECNM.

The segment at 16–57 (CSICDNILRDATTISECLHTFCRKCIYEKITEDEIETCPVCN) adopts an RING-type zinc-finger fold. 2 stretches are compositionally biased toward polar residues: residues 106–121 (ISSL…AQAG) and 157–172 (ESTS…TQNK). 2 disordered regions span residues 106 to 198 (ISSL…WDSK) and 216 to 307 (PLKS…QERR). Over residues 178–198 (SCKESISNKENKDGDEPWDSK) the composition is skewed to basic and acidic residues. Positions 218-227 (KSSASQGSGS) are enriched in low complexity. Basic residues predominate over residues 244 to 253 (TKTKNKKRKC). A compositionally biased stretch (polar residues) spans 262–271 (NGDPTTSETV). A compositionally biased stretch (basic residues) spans 274–284 (KRMRTTQRKRS). A compositionally biased stretch (polar residues) spans 285–294 (ATTLGDSRNL).

In terms of assembly, interacts with DREB2A. Autoubiquitinated. In terms of tissue distribution, expressed in roots, leaves and flowers.

The protein localises to the nucleus. It catalyses the reaction S-ubiquitinyl-[E2 ubiquitin-conjugating enzyme]-L-cysteine + [acceptor protein]-L-lysine = [E2 ubiquitin-conjugating enzyme]-L-cysteine + N(6)-ubiquitinyl-[acceptor protein]-L-lysine.. It functions in the pathway protein modification; protein ubiquitination. In terms of biological role, E3 ubiquitin-protein ligase that acts as a negative regulator of the response to water stress. Mediates ubiquitination and subsequent proteasomal degradation of the drought-induced transcriptional activator DREB2A. Functionally redundant with DRIP2. The polypeptide is E3 ubiquitin protein ligase DRIP1 (DRIP1) (Arabidopsis thaliana (Mouse-ear cress)).